A 240-amino-acid polypeptide reads, in one-letter code: EF-hand domain-containing protein D1 (240 aa).

The interval 17–54 is disordered; sequence EVRAETDQGDPQPAPCDAPAGHPEPEPPARAPTASADS. EF-hand domains lie at 91 to 126 and 127 to 162; these read RLLK…LGAP and QTHL…AAAG. Asp-104, Asp-108, Glu-115, Asp-140, Asp-142, Asp-144, Lys-146, and Glu-151 together coordinate Ca(2+).

As to expression, widely expressed. Highest expression in testis, followed by ovary, kidney, cerebrum, cerebellum, heart, liver, and spleen. In the cerebrum and cerebellum, undetectable at embryonic stages, expression increases after birth up to adult stage. In adult CNS, detected in neurons of the cerebellum, cerebrum and hippocampus formation, including dentate gyrus and Cornu Ammonis, but not in the white matter. In the testis, expressed in spermatocytes, but not in spermatogonia nor in interstitial cells. In ovary, found predominantly in mural granulosa cells and those of the cumulus oophorus. In kidney, expressed in collecting ducts, but not in glomeruli. Not detected in skeletal muscle.

It is found in the mitochondrion inner membrane. In terms of biological role, acts as a calcium sensor for mitochondrial flash (mitoflash) activation, an event characterized by stochastic bursts of superoxide production. May play a role in neuronal differentiation. This chain is EF-hand domain-containing protein D1 (Efhd1), found in Mus musculus (Mouse).